The sequence spans 429 residues: Glutamate-1-semialdehyde 2,1-aminomutase 1 (429 aa).

At Lys-268 the chain carries N6-(pyridoxal phosphate)lysine.

This sequence belongs to the class-III pyridoxal-phosphate-dependent aminotransferase family. HemL subfamily. Homodimer. Requires pyridoxal 5'-phosphate as cofactor.

Its subcellular location is the cytoplasm. The enzyme catalyses (S)-4-amino-5-oxopentanoate = 5-aminolevulinate. Its pathway is porphyrin-containing compound metabolism; protoporphyrin-IX biosynthesis; 5-aminolevulinate from L-glutamyl-tRNA(Glu): step 2/2. This chain is Glutamate-1-semialdehyde 2,1-aminomutase 1, found in Lysinibacillus sphaericus (strain C3-41).